Reading from the N-terminus, the 190-residue chain is E3 ubiquitin-protein ligase RNF183 (190 aa).

Over 1 to 159 the chain is Cytoplasmic; that stretch reads MSEPQGQELR…RECVRNPHFR (159 aa). The segment at 13–60 adopts an RING-type zinc-finger fold; it reads CPVCWNPFNNTFHTPKVLDCCHSFCVECLAHLSLVTPARRRLLCPLCR. Residues 160-180 form a helical; Anchor for type IV membrane protein membrane-spanning segment; sequence IFAYLMAVILSVTLLLIFSIF. Residues 181 to 190 are Lumenal-facing; that stretch reads WTKQFFWGMG.

Interacts with FATE1. Interacts with SEC16A. Interacts with BCL2L1. Autoubiquitinated (in vitro). As to expression, highly expressed in the kidney and testis.

The protein localises to the endoplasmic reticulum membrane. It localises to the endoplasmic reticulum. Its subcellular location is the golgi apparatus. The protein resides in the cis-Golgi network membrane. It is found in the lysosome membrane. It carries out the reaction S-ubiquitinyl-[E2 ubiquitin-conjugating enzyme]-L-cysteine + [acceptor protein]-L-lysine = [E2 ubiquitin-conjugating enzyme]-L-cysteine + N(6)-ubiquitinyl-[acceptor protein]-L-lysine.. It participates in protein modification; protein ubiquitination. Its function is as follows. Acts as an E3 ubiquitin ligase catalyzing the covalent attachment of ubiquitin moieties onto substrate proteins. Triggers apoptosis in response to prolonged ER stress by mediating the polyubiquitination and subsequent proteasomal degradation of BCL2L1. May collaborate with FATE1 to restrain BIK protein levels thus regulating apoptotic signaling. The protein is E3 ubiquitin-protein ligase RNF183 (Rnf183) of Mus musculus (Mouse).